We begin with the raw amino-acid sequence, 274 residues long: Diaminopimelate epimerase (274 aa).

Positions 11, 44, and 64 each coordinate substrate. Cysteine 73 (proton donor) is an active-site residue. Residues 74–75 (GN), asparagine 157, asparagine 190, and 208–209 (ER) each bind substrate. Catalysis depends on cysteine 217, which acts as the Proton acceptor. Residue 218–219 (GS) coordinates substrate.

Belongs to the diaminopimelate epimerase family. In terms of assembly, homodimer.

The protein localises to the cytoplasm. The catalysed reaction is (2S,6S)-2,6-diaminopimelate = meso-2,6-diaminopimelate. It functions in the pathway amino-acid biosynthesis; L-lysine biosynthesis via DAP pathway; DL-2,6-diaminopimelate from LL-2,6-diaminopimelate: step 1/1. Its function is as follows. Catalyzes the stereoinversion of LL-2,6-diaminopimelate (L,L-DAP) to meso-diaminopimelate (meso-DAP), a precursor of L-lysine and an essential component of the bacterial peptidoglycan. The chain is Diaminopimelate epimerase from Escherichia coli O81 (strain ED1a).